A 55-amino-acid polypeptide reads, in one-letter code: Rubredoxin-2 (55 aa).

Residues 1-54 (MRKWQCVVCGFIYDEALGLPEEGIPAGTRWEDIPADWVCPDCGVGKIDFEMIEI) enclose the Rubredoxin-like domain. Fe cation contacts are provided by Cys-6, Cys-9, Cys-39, and Cys-42.

This sequence belongs to the rubredoxin family. Requires Fe(3+) as cofactor.

It is found in the cytoplasm. It participates in hydrocarbon metabolism; alkane degradation. Its function is as follows. Involved in the hydrocarbon hydroxylating system, which transfers electrons from NADH to rubredoxin reductase and then through rubredoxin to alkane 1 monooxygenase. The protein is Rubredoxin-2 (rubA2) of Pseudomonas aeruginosa (strain ATCC 15692 / DSM 22644 / CIP 104116 / JCM 14847 / LMG 12228 / 1C / PRS 101 / PAO1).